We begin with the raw amino-acid sequence, 182 residues long: Peptide deformylase (182 aa).

Residues C100 and H142 each coordinate Fe cation. E143 is a catalytic residue. Residue H146 coordinates Fe cation.

Belongs to the polypeptide deformylase family. It depends on Fe(2+) as a cofactor.

It carries out the reaction N-terminal N-formyl-L-methionyl-[peptide] + H2O = N-terminal L-methionyl-[peptide] + formate. Its function is as follows. Removes the formyl group from the N-terminal Met of newly synthesized proteins. Requires at least a dipeptide for an efficient rate of reaction. N-terminal L-methionine is a prerequisite for activity but the enzyme has broad specificity at other positions. This chain is Peptide deformylase, found in Bartonella bacilliformis (strain ATCC 35685 / KC583 / Herrer 020/F12,63).